A 264-amino-acid chain; its full sequence is Phosphonoacetaldehyde hydrolase (264 aa).

Catalysis depends on aspartate 9, which acts as the Nucleophile. Residues aspartate 9 and alanine 11 each contribute to the Mg(2+) site. Residue lysine 50 is the Schiff-base intermediate with substrate of the active site. Aspartate 183 serves as a coordination point for Mg(2+).

The protein belongs to the HAD-like hydrolase superfamily. PhnX family. As to quaternary structure, homodimer. The cofactor is Mg(2+).

The catalysed reaction is phosphonoacetaldehyde + H2O = acetaldehyde + phosphate + H(+). Involved in phosphonate degradation. The sequence is that of Phosphonoacetaldehyde hydrolase from Bacillus anthracis.